The chain runs to 249 residues: Probable transcriptional regulatory protein HY04AAS1_0501 (249 aa).

Belongs to the TACO1 family.

The protein localises to the cytoplasm. The sequence is that of Probable transcriptional regulatory protein HY04AAS1_0501 from Hydrogenobaculum sp. (strain Y04AAS1).